The chain runs to 488 residues: Glutamyl-tRNA(Gln) amidotransferase subunit A (488 aa).

Catalysis depends on charge relay system residues Lys-77 and Ser-152. The active-site Acyl-ester intermediate is the Ser-176.

It belongs to the amidase family. GatA subfamily. In terms of assembly, heterotrimer of A, B and C subunits.

The enzyme catalyses L-glutamyl-tRNA(Gln) + L-glutamine + ATP + H2O = L-glutaminyl-tRNA(Gln) + L-glutamate + ADP + phosphate + H(+). Allows the formation of correctly charged Gln-tRNA(Gln) through the transamidation of misacylated Glu-tRNA(Gln) in organisms which lack glutaminyl-tRNA synthetase. The reaction takes place in the presence of glutamine and ATP through an activated gamma-phospho-Glu-tRNA(Gln). The sequence is that of Glutamyl-tRNA(Gln) amidotransferase subunit A from Streptococcus pneumoniae (strain ATCC 700669 / Spain 23F-1).